A 94-amino-acid chain; its full sequence is Ig kappa-B5 chain V region 2699 (94 aa).

Positions 1–23 (AFELTQTPSSVEAAVGGTVTINC) are framework-1. The tract at residues 24–34 (QASTDISSNLA) is complementarity-determining-1. Positions 35–49 (WYTPKPGSPPKLLIY) are framework-2. The segment at 50–56 (SASTLAS) is complementarity-determining-2. Positions 57 to 82 (GVSSRFKGSGSGVLITLTISDLECGV) are framework-3. Residue Ser83 is a region of interest, complementarity-determining-3. Residues 84-93 (FGGGTKVVVE) are framework-4.

The protein is Ig kappa-B5 chain V region 2699 of Oryctolagus cuniculus (Rabbit).